Here is a 351-residue protein sequence, read N- to C-terminus: MQRFVSKFVSTPPVPKKFQEIFPKKRTVNKILFQLDTRLTYHEMYPIFLQVSQNTNEENIPWRKKYPYIRSSDIMQMRNVLITLRTQNKFVHKDLLAMEDKLLNIAAELGNNDAISILSFNVIHEYKKENVKSSYEKDIETANEFIKKLYARNHHLTVKLIGDLFFENKTYDKAEKYYQEFLKLENSTKLAGEVHGKLGEIQIKQVNGFLKAEKSWLSCIELLEIERSSRWYFLLARLYMSSEPMKAKALLENCASIGFKECFKTLGFLELNYFNNYERAKEWFKTGMEIMDLECFFGFFDCCVKEENFKGARDCLESVKKLGNDKDKKTMINVFLESRKDSIKLLDKARL.

TPR repeat units lie at residues 155 to 188 and 260 to 294; these read HLTVKLIGDLFFENKTYDKAEKYYQEFLKLENST and KECFKTLGFLELNYFNNYERAKEWFKTGMEIMDLE.

In terms of assembly, interacts with COX18.

Its subcellular location is the mitochondrion inner membrane. In terms of biological role, required to stabilize mitochondrial cytochrome C oxidase subunit 2 (COX2) and to translocate the C-terminal domain of COX2 through the inner membrane. This Saccharomyces cerevisiae (strain ATCC 204508 / S288c) (Baker's yeast) protein is Protein MSS2, mitochondrial (MSS2).